The following is a 221-amino-acid chain: Glutathione S-transferase A3 (221 aa).

At Ala-2 the chain carries N-acetylalanine. Residues 3 to 83 (GKPVLHYFDG…YIASKYNLYG (81 aa)) enclose the GST N-terminal domain. Lys-4 carries the N6-succinyllysine modification. Glutathione is bound by residues Tyr-9, Arg-45, 54–55 (QV), and 67–68 (QT). A GST C-terminal domain is found at 85 to 207 (DMKERAIIDM…LQPGSQRKPF (123 aa)).

As to quaternary structure, homodimer.

Its subcellular location is the cytoplasm. The enzyme catalyses RX + glutathione = an S-substituted glutathione + a halide anion + H(+). The catalysed reaction is androst-5-ene-3,17-dione = androst-4-ene-3,17-dione. It catalyses the reaction pregn-5-ene-3,20-dione = progesterone. Conjugation of reduced glutathione to a wide number of exogenous and endogenous hydrophobic electrophiles. Catalyzes isomerization reactions that contribute to the biosynthesis of steroid hormones. Efficiently catalyze obligatory double-bond isomerizations of delta(5)-androstene-3,17-dione and delta(5)-pregnene-3,20-dione, precursors to testosterone and progesterone, respectively. Has a high catalytic activity for aflatoxin B1-8,9 epoxide. The protein is Glutathione S-transferase A3 of Mus musculus (Mouse).